Reading from the N-terminus, the 139-residue chain is Self-incompatibility protein S1 (139 aa).

The first 19 residues, 1 to 19 (MNIFYVIVLLSFFLSKSSG), serve as a signal peptide directing secretion. The N-linked (GlcNAc...) asparagine glycan is linked to Asn-51.

This sequence belongs to the plant self-incompatibility (S1) protein family. Glycosylated (S1b) and unglocosylated (S1a) forms coexist. In terms of tissue distribution, accumulates in the stigma (at protein level).

It is found in the secreted. In terms of biological role, exhibits specific pollen self-inhibitory activity thus preventing self-fertilization. In Papaver rhoeas (Common poppy), this protein is Self-incompatibility protein S1.